The following is a 221-amino-acid chain: Nuclear phosphoprotein UL3 homolog (221 aa).

Belongs to the alphaherpesvirinae HHV-1 UL3 family. Phosphorylated.

It localises to the host nucleus. This is Nuclear phosphoprotein UL3 homolog from Varicella-zoster virus (strain Oka vaccine) (HHV-3).